The chain runs to 356 residues: Zinc finger CCCH domain-containing protein 49 (356 aa).

2 C3H1-type zinc fingers span residues 120-146 and 155-177; these read YSGTACPDFRKGGCKKGDSCEFAHGVF and YRTQPCKDGGNCLRKICFFAHSP. Positions 209-235 are disordered; the sequence is ISPVSGSPPMSPRADSESSPMTQSLSR. A compositionally biased stretch (polar residues) spans 225–235; sequence ESSPMTQSLSR.

This chain is Zinc finger CCCH domain-containing protein 49, found in Arabidopsis thaliana (Mouse-ear cress).